The primary structure comprises 146 residues: UPF0178 protein BCG9842_B2187 (146 aa).

This sequence belongs to the UPF0178 family.

This is UPF0178 protein BCG9842_B2187 from Bacillus cereus (strain G9842).